A 335-amino-acid polypeptide reads, in one-letter code: Ornithine carbamoyltransferase (335 aa).

Carbamoyl phosphate-binding positions include 56-59, Gln83, Arg107, and 134-137; these read STRT and HPTQ. L-ornithine contacts are provided by residues Asn168, Asp232, and 236–237; that span reads SM. Residues 274-275 and Arg320 contribute to the carbamoyl phosphate site; that span reads CL.

This sequence belongs to the aspartate/ornithine carbamoyltransferase superfamily. OTCase family.

It localises to the cytoplasm. It catalyses the reaction carbamoyl phosphate + L-ornithine = L-citrulline + phosphate + H(+). The protein operates within amino-acid biosynthesis; L-arginine biosynthesis; L-arginine from L-ornithine and carbamoyl phosphate: step 1/3. In terms of biological role, reversibly catalyzes the transfer of the carbamoyl group from carbamoyl phosphate (CP) to the N(epsilon) atom of ornithine (ORN) to produce L-citrulline. The sequence is that of Ornithine carbamoyltransferase from Yersinia pseudotuberculosis serotype I (strain IP32953).